Reading from the N-terminus, the 171-residue chain is Peptidyl-prolyl cis-trans isomerase (171 aa).

Residues 7–170 (FFDLTIGGAP…KPVVIADCGQ (164 aa)) form the PPIase cyclophilin-type domain.

Belongs to the cyclophilin-type PPIase family. Expressed in leaves, floral buds, growing shoots and stamens at anthesis.

The protein localises to the cytoplasm. The catalysed reaction is [protein]-peptidylproline (omega=180) = [protein]-peptidylproline (omega=0). With respect to regulation, binds cyclosporin A (CsA). CsA mediates some of its effects via an inhibitory action on PPIase. Its function is as follows. PPIases accelerate the folding of proteins. It catalyzes the cis-trans isomerization of proline imidic peptide bonds in oligopeptides. The chain is Peptidyl-prolyl cis-trans isomerase from Solanum lycopersicum (Tomato).